Reading from the N-terminus, the 241-residue chain is Triosephosphate isomerase (241 aa).

Residue 9-11 (NWK) participates in substrate binding. Residue histidine 96 is the Electrophile of the active site. Glutamate 165 (proton acceptor) is an active-site residue. Substrate-binding positions include glycine 171, serine 204, and 225 to 226 (GG).

Belongs to the triosephosphate isomerase family. Homodimer.

It localises to the cytoplasm. The catalysed reaction is D-glyceraldehyde 3-phosphate = dihydroxyacetone phosphate. It participates in carbohydrate biosynthesis; gluconeogenesis. It functions in the pathway carbohydrate degradation; glycolysis; D-glyceraldehyde 3-phosphate from glycerone phosphate: step 1/1. In terms of biological role, involved in the gluconeogenesis. Catalyzes stereospecifically the conversion of dihydroxyacetone phosphate (DHAP) to D-glyceraldehyde-3-phosphate (G3P). The protein is Triosephosphate isomerase of Prochlorococcus marinus (strain MIT 9312).